Here is a 549-residue protein sequence, read N- to C-terminus: Beta-mannosyltransferase 3 (549 aa).

At 1-37 (MFESDLSFYSALLILCCPISIVFFKKFPIKGYTGANK) the chain is on the cytoplasmic side. A helical membrane pass occupies residues 38-58 (VSLFLQCLIAILNLNILYSFI). Residues 59-549 (NSLTITLGHD…DTMGWDKLSR (491 aa)) are Extracellular-facing.

It belongs to the BMT family.

It localises to the membrane. Beta-mannosyltransferase involved in cell wall biosynthesis. Required for addition of the second beta-mannose residue to acid-stable fraction of cell wall phosphopeptidomannan, and in elongation of beta-mannose chains on the phosphopeptidomannan acid-labile fraction. The polypeptide is Beta-mannosyltransferase 3 (BMT3) (Candida albicans (strain SC5314 / ATCC MYA-2876) (Yeast)).